Reading from the N-terminus, the 202-residue chain is Probable GTP-binding protein EngB (202 aa).

The EngB-type G domain maps to 26–200; it reads VSKEIAFTGS…KAQLDSWFSI (175 aa). GTP-binding positions include 34–41, 61–65, 79–82, 146–149, and 179–181; these read GSSNVGKS, GSTKT, DLPG, NKAD, and FSS. 2 residues coordinate Mg(2+): Ser-41 and Thr-63.

It belongs to the TRAFAC class TrmE-Era-EngA-EngB-Septin-like GTPase superfamily. EngB GTPase family. Mg(2+) serves as cofactor.

Necessary for normal cell division and for the maintenance of normal septation. The sequence is that of Probable GTP-binding protein EngB from Baumannia cicadellinicola subsp. Homalodisca coagulata.